The chain runs to 257 residues: Putative hydro-lyase Bphy_2364 (257 aa).

This sequence belongs to the D-glutamate cyclase family.

This Paraburkholderia phymatum (strain DSM 17167 / CIP 108236 / LMG 21445 / STM815) (Burkholderia phymatum) protein is Putative hydro-lyase Bphy_2364.